The chain runs to 124 residues: Small ribosomal subunit protein uS12 (124 aa).

Asp-89 carries the 3-methylthioaspartic acid modification. The disordered stretch occupies residues 104 to 124 (TAGVKDRRQSRSKYGAKAPKE).

The protein belongs to the universal ribosomal protein uS12 family. As to quaternary structure, part of the 30S ribosomal subunit. Contacts proteins S8 and S17. May interact with IF1 in the 30S initiation complex.

With S4 and S5 plays an important role in translational accuracy. Functionally, interacts with and stabilizes bases of the 16S rRNA that are involved in tRNA selection in the A site and with the mRNA backbone. Located at the interface of the 30S and 50S subunits, it traverses the body of the 30S subunit contacting proteins on the other side and probably holding the rRNA structure together. The combined cluster of proteins S8, S12 and S17 appears to hold together the shoulder and platform of the 30S subunit. This chain is Small ribosomal subunit protein uS12, found in Synechococcus sp. (strain CC9605).